Here is a 173-residue protein sequence, read N- to C-terminus: dCTP deaminase, dUMP-forming (173 aa).

Residues 93–98 (RSSIGR), Asp111, 119–121 (TLE), Gln138, and Tyr151 each bind dCTP. Glu121 serves as the catalytic Proton donor/acceptor.

Belongs to the dCTP deaminase family. Homotrimer.

The catalysed reaction is dCTP + 2 H2O = dUMP + NH4(+) + diphosphate. Its pathway is pyrimidine metabolism; dUMP biosynthesis; dUMP from dCTP: step 1/1. Bifunctional enzyme that catalyzes both the deamination of dCTP to dUTP and the hydrolysis of dUTP to dUMP without releasing the toxic dUTP intermediate. The protein is dCTP deaminase, dUMP-forming of Cytophaga hutchinsonii (strain ATCC 33406 / DSM 1761 / CIP 103989 / NBRC 15051 / NCIMB 9469 / D465).